The sequence spans 549 residues: Undecaprenyl phosphate-alpha-4-amino-4-deoxy-L-arabinose arabinosyl transferase 2 (549 aa).

12 helical membrane passes run leucine 9–isoleucine 29, leucine 80–alanine 102, serine 112–alanine 132, asparagine 133–leucine 153, phenylalanine 176–leucine 196, leucine 204–leucine 224, phenylalanine 259–phenylalanine 279, glycine 290–glycine 310, leucine 312–alanine 332, alanine 342–valine 362, serine 377–phenylalanine 397, and cysteine 402–proline 422.

Belongs to the glycosyltransferase 83 family.

Its subcellular location is the cell inner membrane. It carries out the reaction 4-amino-4-deoxy-alpha-L-arabinopyranosyl di-trans,octa-cis-undecaprenyl phosphate + lipid IVA = lipid IIA + di-trans,octa-cis-undecaprenyl phosphate.. The protein operates within lipopolysaccharide metabolism; 4-amino-4-deoxy-beta-L-arabinose-lipid A biosynthesis. In terms of biological role, catalyzes the transfer of the L-Ara4N moiety of the glycolipid undecaprenyl phosphate-alpha-L-Ara4N to lipid A. The modified arabinose is attached to lipid A and is required for resistance to polymyxin and cationic antimicrobial peptides. The sequence is that of Undecaprenyl phosphate-alpha-4-amino-4-deoxy-L-arabinose arabinosyl transferase 2 from Pseudomonas fluorescens (strain Pf0-1).